The chain runs to 430 residues: Glutamate-1-semialdehyde 2,1-aminomutase 2 (430 aa).

Residue Lys268 is modified to N6-(pyridoxal phosphate)lysine.

The protein belongs to the class-III pyridoxal-phosphate-dependent aminotransferase family. HemL subfamily. Homodimer. Requires pyridoxal 5'-phosphate as cofactor.

It is found in the cytoplasm. It carries out the reaction (S)-4-amino-5-oxopentanoate = 5-aminolevulinate. The protein operates within porphyrin-containing compound metabolism; protoporphyrin-IX biosynthesis; 5-aminolevulinate from L-glutamyl-tRNA(Glu): step 2/2. The chain is Glutamate-1-semialdehyde 2,1-aminomutase 2 from Shouchella clausii (strain KSM-K16) (Alkalihalobacillus clausii).